Consider the following 283-residue polypeptide: ATP phosphoribosyltransferase (283 aa).

This sequence belongs to the ATP phosphoribosyltransferase family. Long subfamily. Requires Mg(2+) as cofactor.

It is found in the cytoplasm. The enzyme catalyses 1-(5-phospho-beta-D-ribosyl)-ATP + diphosphate = 5-phospho-alpha-D-ribose 1-diphosphate + ATP. It participates in amino-acid biosynthesis; L-histidine biosynthesis; L-histidine from 5-phospho-alpha-D-ribose 1-diphosphate: step 1/9. With respect to regulation, feedback inhibited by histidine. Its function is as follows. Catalyzes the condensation of ATP and 5-phosphoribose 1-diphosphate to form N'-(5'-phosphoribosyl)-ATP (PR-ATP). Has a crucial role in the pathway because the rate of histidine biosynthesis seems to be controlled primarily by regulation of HisG enzymatic activity. This is ATP phosphoribosyltransferase from Phocaeicola vulgatus (strain ATCC 8482 / DSM 1447 / JCM 5826 / CCUG 4940 / NBRC 14291 / NCTC 11154) (Bacteroides vulgatus).